Reading from the N-terminus, the 388-residue chain is MNLHEYQAKSLFAEYGLPVSEGFACDTAQEAVEAAGRIGGNLWVVKCQVHAGGRGKAGGVKVTGDKEEIRAFAEHWLGKNLVTYQTDEKGQPVAKILVESCTDIANELYLGAVVDRATRRVVFMASTEGGVEIEKVAEETPELIHKAIIDPLTGPQPYQARDLGFKLGLNPTQMKQFTKIFMGLATMFVDHDFALLEINPLVITTEGNLHCLDGKIGIDGNALFRQAKIKAMHDPSQDDAREAHAAMFELNYVALDGNVGCMVNGAGLAMGTMDIVNLHGGKPANFLDVGGGATKERVAEAFKIILSDSNVKAVLVNIFGGIVRCDMIAEGIIGAVKEVGVKVPVVVRLEGTNAELGREVLAKSGLDIIAANSLTDAAEQVVKAAEGK.

An ATP-grasp domain is found at 9–244; that stretch reads KSLFAEYGLP…PSQDDAREAH (236 aa). Residues Lys46, 53 to 55, Glu99, Thr102, and Glu107 each bind ATP; that span reads GRG. Mg(2+) is bound by residues Asn199 and Asp213. Substrate contacts are provided by residues Asn264 and 321–323; that span reads GIV.

It belongs to the succinate/malate CoA ligase beta subunit family. Heterotetramer of two alpha and two beta subunits. The cofactor is Mg(2+).

It carries out the reaction succinate + ATP + CoA = succinyl-CoA + ADP + phosphate. The enzyme catalyses GTP + succinate + CoA = succinyl-CoA + GDP + phosphate. Its pathway is carbohydrate metabolism; tricarboxylic acid cycle; succinate from succinyl-CoA (ligase route): step 1/1. Functionally, succinyl-CoA synthetase functions in the citric acid cycle (TCA), coupling the hydrolysis of succinyl-CoA to the synthesis of either ATP or GTP and thus represents the only step of substrate-level phosphorylation in the TCA. The beta subunit provides nucleotide specificity of the enzyme and binds the substrate succinate, while the binding sites for coenzyme A and phosphate are found in the alpha subunit. This chain is Succinate--CoA ligase [ADP-forming] subunit beta, found in Shewanella sp. (strain ANA-3).